Reading from the N-terminus, the 251-residue chain is 2,3-bisphosphoglycerate-dependent phosphoglycerate mutase (251 aa).

Substrate-binding positions include 11–18 (RHGESDWN), 24–25 (TG), R63, 90–93 (ERHY), K101, 117–118 (RR), and 184–185 (GN). H12 functions as the Tele-phosphohistidine intermediate in the catalytic mechanism. Residue E90 is the Proton donor/acceptor of the active site.

This sequence belongs to the phosphoglycerate mutase family. BPG-dependent PGAM subfamily.

The catalysed reaction is (2R)-2-phosphoglycerate = (2R)-3-phosphoglycerate. It participates in carbohydrate degradation; glycolysis; pyruvate from D-glyceraldehyde 3-phosphate: step 3/5. Functionally, catalyzes the interconversion of 2-phosphoglycerate and 3-phosphoglycerate. In Mycobacterium marinum (strain ATCC BAA-535 / M), this protein is 2,3-bisphosphoglycerate-dependent phosphoglycerate mutase.